The chain runs to 500 residues: Tektin-like protein 1 (500 aa).

The interval 1–25 (MPVLLPSTDRDQDSRVGAPEWHQAA) is disordered. The residue at position 14 (Ser14) is a Phosphoserine. Residues 198–229 (MLVWEREELKSMKRKMEKDMERSEALLKALAS) are a coiled coil. The segment at 265 to 286 (VDITRPPTPRTQGLKTPPPDPV) is disordered. The residue at position 372 (Tyr372) is a Phosphotyrosine. Positions 422 to 448 (LTRHNLQMEKNLKELRTTHDNLAWSLN) form a coiled coil.

As to quaternary structure, microtubule inner protein component of sperm flagellar doublet microtubules.

It is found in the cytoplasm. The protein localises to the cytoskeleton. Its subcellular location is the flagellum axoneme. Microtubule inner protein (MIP) part of the dynein-decorated doublet microtubules (DMTs) in sperm flagellar axoneme, which is required for motile flagellum beating. Forms an extensive interaction network cross-linking the lumen of axonemal doublet microtubules. In Rattus norvegicus (Rat), this protein is Tektin-like protein 1.